We begin with the raw amino-acid sequence, 507 residues long: MVTIRADEISNIIRERIEQYNREVKIVNTGTVLQVGDGIARIHGLDEVMAGELVEFEEGTIGIALNLESNNVGVVLMGDGLLIQEGSSVKATGRIAQIPVSEAYLGRVVNALAKPIDGRGEISASEFRLIESAAPGIISRRSVYEPLQTGLIAIDSMIPIGRGQRELIIGDRQTGKTAVATDTILNQQGQNVICVYVAIGQKASSVAQVVTTLQERGAMEYTIVVAETADSPATLQYLAPYTGASLAEYFMYRERHTLIIYDDLSKQAQAYRQMSLLLRRPPGREAYPGDVFYLHSRLLERAAKLSSSLGEGSMTALPIVETQSGDVSAYIPTNVISITDGQIFLSADLFNSGIRPAINVGISVSRVGSAAQIKAMKQVAGKLKLELAQFAELEAFAQFASDLDKATQNQLARGQRLRELLKQSQSAPLTVEEQIMTIYTGTNGYLDSLEVGQVRKFLVELRTYLKTNKPQFQEIISSTKTFTEEAEALLKEAIQEQMKRFILQEQA.

ATP is bound at residue 170 to 177 (GDRQTGKT).

It belongs to the ATPase alpha/beta chains family. As to quaternary structure, F-type ATPases have 2 components, CF(1) - the catalytic core - and CF(0) - the membrane proton channel. CF(1) has five subunits: alpha(3), beta(3), gamma(1), delta(1), epsilon(1). CF(0) has four main subunits: a, b, b' and c.

It is found in the plastid. It localises to the chloroplast thylakoid membrane. The catalysed reaction is ATP + H2O + 4 H(+)(in) = ADP + phosphate + 5 H(+)(out). Its function is as follows. Produces ATP from ADP in the presence of a proton gradient across the membrane. The alpha chain is a regulatory subunit. This Atropa belladonna (Belladonna) protein is ATP synthase subunit alpha, chloroplastic.